The following is a 2472-amino-acid chain: Highly reducing polyketide synthase xilA (2472 aa).

Residues 1–417 form the Ketosynthase family 3 (KS3) domain; the sequence is MPGGVRDLPA…GTNGHCIIDD (417 aa). Residues Cys162, His298, and His340 each act as for beta-ketoacyl synthase activity in the active site. The interval 442–502 is disordered; the sequence is NDINGKSGTN…QRKHHHPKTD (61 aa). Residues 450-489 show a composition bias toward low complexity; that stretch reads TNGANGANRVNGVNGVNGVNGVNGANGHSNASLLSNGSNN. Residues 597 to 932 enclose the Malonyl-CoA:ACP transacylase (MAT) domain; it reads FIFTGQGAQW…CTGTLFVHNV (336 aa). The tract at residues 991 to 1129 is N-terminal hotdog fold; sequence HDLLGSKVPG…GQIKVEVAKF (139 aa). The PKS/mFAS DH domain occupies 991–1294; the sequence is HDLLGSKVPG…FTSLNNEQES (304 aa). The Proton acceptor; for dehydratase activity role is filled by His1023. A C-terminal hotdog fold region spans residues 1141–1294; the sequence is GRLVDAQTWY…FTSLNNEQES (154 aa). The Proton donor; for dehydratase activity role is filled by Asp1207. Positions 1289–1505 are methyltransferase (CMeT) domain; that stretch reads NNEQESPSTG…IITVHALRSI (217 aa). An Enoyl reductase (ER) domain is found at 1724-2036; it reads GLLTSLYFKP…KGTHIGKMVI (313 aa). The Ketoreductase (KR) domain maps to 2060–2239; that stretch reads ASYILVGGLS…ATTVSLGFIK (180 aa). Positions 2391–2469 constitute a Carrier domain; that stretch reads ETVKLVSDAI…SIARVIVEEA (79 aa). Ser2428 is subject to O-(pantetheine 4'-phosphoryl)serine.

Pantetheine 4'-phosphate is required as a cofactor.

The protein operates within secondary metabolite biosynthesis. Highly reducing polyketide synthase; part of the gene cluster that mediates the biosynthesis of the 6-methyl-2-pyrone derivative xylariolide D. XilA produces the 5-alkyl-6-methyl-2-pyrone backbone called prexylariolide D via sequential condensations of 4 malonyl-CoA units with one acetyl-CoA starter unit. During the biosynthesis, the linear polyketide chain is branched by the addition of an acetyl unit as the origin of the methyl group at the 2-pyrone ring. Prexylariolide D is then hydroxylated at the side chain by xilC to form the final product, xylariolide D. The polypeptide is Highly reducing polyketide synthase xilA (Penicillium crustosum (Blue mold fungus)).